The sequence spans 523 residues: Succinate-semialdehyde dehydrogenase, mitochondrial (523 aa).

Residues 1–35 (MATCFLLRNFCAARPALRPPGRLLREPAGAQRRSY) constitute a mitochondrion transit peptide. Lys-114 carries the post-translational modification N6-acetyllysine; alternate. At Lys-114 the chain carries N6-succinyllysine; alternate. Residues Lys-123 and Lys-172 each carry the N6-succinyllysine modification. Residues Arg-201 and 216–219 (KPAE) each bind NAD(+). Arg-201 contacts substrate. An N6-acetyllysine; alternate modification is found at Lys-253. The residue at position 253 (Lys-253) is an N6-succinyllysine; alternate. Position 272–277 (272–277 (GSTATG)) interacts with NAD(+). Residue Glu-294 is the Proton acceptor of the active site. Residue Arg-322 coordinates substrate. Cys-328 (nucleophile) is an active-site residue. The cysteines at positions 328 and 330 are disulfide-linked. Lys-353 is subject to N6-acetyllysine. Lys-390 is subject to N6-succinyllysine. At Lys-399 the chain carries N6-acetyllysine. Ser-486 contacts substrate. Ser-487 bears the Phosphoserine mark.

It belongs to the aldehyde dehydrogenase family. As to quaternary structure, homotetramer. In terms of tissue distribution, brain, pancreas, heart, liver, skeletal muscle, kidney. Lower in spleen, lung, kidney and testis.

The protein localises to the mitochondrion. It carries out the reaction succinate semialdehyde + NAD(+) + H2O = succinate + NADH + 2 H(+). It participates in amino-acid degradation; 4-aminobutanoate degradation. With respect to regulation, redox-regulated. Inhibited under oxydizing conditions. Functionally, catalyzes one step in the degradation of the inhibitory neurotransmitter gamma-aminobutyric acid (GABA). This chain is Succinate-semialdehyde dehydrogenase, mitochondrial (Aldh5a1), found in Rattus norvegicus (Rat).